We begin with the raw amino-acid sequence, 599 residues long: Adenine deaminase (599 aa).

It belongs to the metallo-dependent hydrolases superfamily. Adenine deaminase family. The cofactor is Mn(2+).

The enzyme catalyses adenine + H2O + H(+) = hypoxanthine + NH4(+). The polypeptide is Adenine deaminase (Clostridium botulinum (strain 657 / Type Ba4)).